Here is a 444-residue protein sequence, read N- to C-terminus: Na(+)/H(+) antiporter NhaA 2 (444 aa).

Transmembrane regions (helical) follow at residues 21–41 (FSGIFLFFCAVSAMIVANSPF), 64–84 (FSIHDWINDVLMSIFFLMVGL), 102–122 (AFPVIGAVGGMIVPGVIYYVL), 131–151 (GFGIPMATDIAFALGVILLLG), 160–180 (VFLVTLAVADDLGAIVVIAVF), 185–205 (EGLHFIYLGVAAGLLILLTGI), 212–232 (HLGVYIGIGILLWFCVHHSGI), 307–327 (ALQPLCAFIIMPLFAFANAGV), 342–362 (LGVILGLVVGKPLGILSLTFL), 377–397 (WSHIFGAGMLAGIGFTMSMFV), and 413–433 (IAILLASSIAGIVGSLYLIIN).

Belongs to the NhaA Na(+)/H(+) (TC 2.A.33) antiporter family.

It is found in the cell inner membrane. The enzyme catalyses Na(+)(in) + 2 H(+)(out) = Na(+)(out) + 2 H(+)(in). Functionally, na(+)/H(+) antiporter that extrudes sodium in exchange for external protons. In Helicobacter hepaticus (strain ATCC 51449 / 3B1), this protein is Na(+)/H(+) antiporter NhaA 2.